We begin with the raw amino-acid sequence, 335 residues long: Glyceraldehyde-3-phosphate dehydrogenase (335 aa).

Residues arginine 12–isoleucine 13, aspartate 36, arginine 80, and serine 122 contribute to the NAD(+) site. D-glyceraldehyde 3-phosphate-binding positions include serine 152–threonine 154, threonine 183, arginine 198, threonine 211–glycine 212, and arginine 234. Cysteine 153 (nucleophile) is an active-site residue. Asparagine 316 contacts NAD(+).

Belongs to the glyceraldehyde-3-phosphate dehydrogenase family. As to quaternary structure, homotetramer.

Its subcellular location is the cytoplasm. It carries out the reaction D-glyceraldehyde 3-phosphate + phosphate + NAD(+) = (2R)-3-phospho-glyceroyl phosphate + NADH + H(+). It participates in carbohydrate degradation; glycolysis; pyruvate from D-glyceraldehyde 3-phosphate: step 1/5. Its function is as follows. Catalyzes the oxidative phosphorylation of glyceraldehyde 3-phosphate (G3P) to 1,3-bisphosphoglycerate (BPG) using the cofactor NAD. The first reaction step involves the formation of a hemiacetal intermediate between G3P and a cysteine residue, and this hemiacetal intermediate is then oxidized to a thioester, with concomitant reduction of NAD to NADH. The reduced NADH is then exchanged with the second NAD, and the thioester is attacked by a nucleophilic inorganic phosphate to produce BPG. In Xanthobacter flavus, this protein is Glyceraldehyde-3-phosphate dehydrogenase (gap).